Consider the following 255-residue polypeptide: MTMALYWQVSGQGQDLVLVHGWGMNGAVWQQTAQALSDHFRVHVVDLPGYGHSAEQHAASLEEIAQALLEHAPRNAIWVGWSLGGLVATHMALHHSDYVSKLVTVASSPKFAAQGSWRGIQPDVLTAFTDQLVADFQLTIERFMALQAMGSPSARQDVKVLKQAVLSRPMPNPQSLLAGLTMLAEVDLRDELQHISVPMLRLYGRLDGLVPAKVARDLNHLAPYSEAFMFDQSSHAPFMTEAEAFCQQLIEFATR.

The region spanning Leu16–Glu241 is the AB hydrolase-1 domain. Substrate-binding positions include Trp22, Ser82–Leu83, and Phe143–Gln147. The active-site Nucleophile is Ser82. Residues Asp207 and His235 contribute to the active site. His235 contributes to the substrate binding site.

It belongs to the AB hydrolase superfamily. Carboxylesterase BioH family. In terms of assembly, monomer.

Its subcellular location is the cytoplasm. The catalysed reaction is 6-carboxyhexanoyl-[ACP] methyl ester + H2O = 6-carboxyhexanoyl-[ACP] + methanol + H(+). Its pathway is cofactor biosynthesis; biotin biosynthesis. Its function is as follows. The physiological role of BioH is to remove the methyl group introduced by BioC when the pimeloyl moiety is complete. It allows to synthesize pimeloyl-ACP via the fatty acid synthetic pathway through the hydrolysis of the ester bonds of pimeloyl-ACP esters. This Vibrio cholerae serotype O1 (strain ATCC 39315 / El Tor Inaba N16961) protein is Pimeloyl-[acyl-carrier protein] methyl ester esterase.